A 386-amino-acid chain; its full sequence is Succinate--CoA ligase [ADP-forming] subunit beta (386 aa).

The 227-residue stretch at 9–235 (KELFAKHDVP…REEEDPLESA (227 aa)) folds into the ATP-grasp domain. Residues Lys-44, 51 to 53 (GRG), Ala-93, and Glu-98 contribute to the ATP site. Positions 190 and 204 each coordinate Mg(2+). Substrate contacts are provided by residues Asn-255 and 317–319 (GIT).

Belongs to the succinate/malate CoA ligase beta subunit family. As to quaternary structure, heterotetramer of two alpha and two beta subunits. The cofactor is Mg(2+).

The enzyme catalyses succinate + ATP + CoA = succinyl-CoA + ADP + phosphate. It catalyses the reaction GTP + succinate + CoA = succinyl-CoA + GDP + phosphate. Its pathway is carbohydrate metabolism; tricarboxylic acid cycle; succinate from succinyl-CoA (ligase route): step 1/1. In terms of biological role, succinyl-CoA synthetase functions in the citric acid cycle (TCA), coupling the hydrolysis of succinyl-CoA to the synthesis of either ATP or GTP and thus represents the only step of substrate-level phosphorylation in the TCA. The beta subunit provides nucleotide specificity of the enzyme and binds the substrate succinate, while the binding sites for coenzyme A and phosphate are found in the alpha subunit. This is Succinate--CoA ligase [ADP-forming] subunit beta from Nocardioides sp. (strain ATCC BAA-499 / JS614).